Reading from the N-terminus, the 239-residue chain is 1-(5-phosphoribosyl)-5-[(5-phosphoribosylamino)methylideneamino] imidazole-4-carboxamide isomerase (239 aa).

Residue D8 is the Proton acceptor of the active site. Residue D129 is the Proton donor of the active site.

It belongs to the HisA/HisF family.

The protein localises to the cytoplasm. It catalyses the reaction 1-(5-phospho-beta-D-ribosyl)-5-[(5-phospho-beta-D-ribosylamino)methylideneamino]imidazole-4-carboxamide = 5-[(5-phospho-1-deoxy-D-ribulos-1-ylimino)methylamino]-1-(5-phospho-beta-D-ribosyl)imidazole-4-carboxamide. The protein operates within amino-acid biosynthesis; L-histidine biosynthesis; L-histidine from 5-phospho-alpha-D-ribose 1-diphosphate: step 4/9. The polypeptide is 1-(5-phosphoribosyl)-5-[(5-phosphoribosylamino)methylideneamino] imidazole-4-carboxamide isomerase (Legionella pneumophila subsp. pneumophila (strain Philadelphia 1 / ATCC 33152 / DSM 7513)).